A 1034-amino-acid chain; its full sequence is FACT complex subunit spt-16 (1034 aa).

Basic and acidic residues-rich tracts occupy residues 433–448, 463–481, and 493–503; these read EEQE…DQKK, TRNK…KELG, and SKQDGGTDEKK. The disordered stretch occupies residues 433 to 511; it reads EEQENRETER…KKVKKSNVSY (79 aa). The stretch at 617–642 forms a coiled coil; that stretch reads LSTAFRQIKEMQKRFRTEEAEEREKD. Acidic residues-rich tracts occupy residues 926-950 and 959-983; these read AESE…EADA and SDED…DSDE. Residues 926–1034 are disordered; that stretch reads AESEGEDAGD…KAGPSHKRRK (109 aa). Residues 984-1020 are compositionally biased toward basic and acidic residues; that stretch reads SEGKDWSDLEEEAAKADKRREVEDGGRDRDRDRDRKR. A compositionally biased stretch (basic residues) spans 1021-1034; it reads PSSSKAGPSHKRRK.

Belongs to the peptidase M24 family. SPT16 subfamily. In terms of assembly, component of the FACT complex, a stable heterodimer of spt-16 and hmg-3 or hmg-4.

It localises to the nucleus. The protein localises to the chromosome. Its function is as follows. Component of the FACT complex, a general chromatin factor that acts to reorganize nucleosomes. The FACT complex is involved in multiple processes that require DNA as a template such as mRNA elongation, DNA replication and DNA repair. During transcription elongation the FACT complex acts as a histone chaperone that both destabilizes and restores nucleosomal structure. It facilitates the passage of RNA polymerase II and transcription by promoting the dissociation of one histone H2A-H2B dimer from the nucleosome, then subsequently promotes the reestablishment of the nucleosome following the passage of RNA polymerase II. This is FACT complex subunit spt-16 (spt-16) from Caenorhabditis briggsae.